Reading from the N-terminus, the 123-residue chain is Large ribosomal subunit protein bL12 (123 aa).

The protein belongs to the bacterial ribosomal protein bL12 family. In terms of assembly, homodimer. Part of the ribosomal stalk of the 50S ribosomal subunit. Forms a multimeric L10(L12)X complex, where L10 forms an elongated spine to which 2 to 4 L12 dimers bind in a sequential fashion. Binds GTP-bound translation factors.

Forms part of the ribosomal stalk which helps the ribosome interact with GTP-bound translation factors. Is thus essential for accurate translation. In Mycoplasmopsis synoviae (strain 53) (Mycoplasma synoviae), this protein is Large ribosomal subunit protein bL12.